A 306-amino-acid chain; its full sequence is Putative secretory carrier-associated membrane protein 1 (306 aa).

A disordered region spans residues 1–60 (MAGRYDSNPFEEDDVNPFSEQARGKAGGQPSYGGGAFYMPNPRNVPSMSSNSRLSPLPPE). The Cytoplasmic segment spans residues 1–141 (MAGRYDSNPF…EIPSHLQRMQ (141 aa)). The span at 25–36 (KAGGQPSYGGGA) shows a compositional bias: gly residues. Residues 44–54 (NVPSMSSNSRL) are compositionally biased toward polar residues. Residues 72–109 (LDSSKDLKNREKELQAREAELNKREKELKRREEAAARA) are a coiled coil. A run of 4 helical transmembrane segments spans residues 142-162 (YVAF…VIAV), 174-194 (IWLL…VLWY), 209-229 (FGLF…SAVA), and 257-277 (IFYF…IWVI). The Cytoplasmic portion of the chain corresponds to 278–306 (QQVYMYFRGSGKAAEMKRDATRGAMRAAF).

The protein belongs to the SCAMP family.

Its subcellular location is the cell membrane. The protein resides in the cytoplasmic vesicle. It is found in the secretory vesicle membrane. Probably involved in membrane trafficking. This is Putative secretory carrier-associated membrane protein 1 (SCAMP1) from Oryza sativa subsp. indica (Rice).